The primary structure comprises 548 residues: Chaperonin GroEL (548 aa).

Residues 30–33 (TLGP), K51, 87–91 (DGTTT), G415, 479–481 (NAA), and D495 each bind ATP. The interval 525 to 548 (PKEDKTSDASSSPAGGMGGMGGMM) is disordered. Positions 539 to 548 (GGMGGMGGMM) are enriched in gly residues.

This sequence belongs to the chaperonin (HSP60) family. In terms of assembly, forms a cylinder of 14 subunits composed of two heptameric rings stacked back-to-back. Interacts with the co-chaperonin GroES.

It localises to the cytoplasm. The catalysed reaction is ATP + H2O + a folded polypeptide = ADP + phosphate + an unfolded polypeptide.. Its function is as follows. Together with its co-chaperonin GroES, plays an essential role in assisting protein folding. The GroEL-GroES system forms a nano-cage that allows encapsulation of the non-native substrate proteins and provides a physical environment optimized to promote and accelerate protein folding. The sequence is that of Chaperonin GroEL from Buchnera aphidicola subsp. Rhopalosiphum padi.